The following is a 270-amino-acid chain: tRNA pseudouridine synthase A (270 aa).

D51 functions as the Nucleophile in the catalytic mechanism. Position 109 (Y109) interacts with substrate.

The protein belongs to the tRNA pseudouridine synthase TruA family. In terms of assembly, homodimer.

It catalyses the reaction uridine(38/39/40) in tRNA = pseudouridine(38/39/40) in tRNA. In terms of biological role, formation of pseudouridine at positions 38, 39 and 40 in the anticodon stem and loop of transfer RNAs. The protein is tRNA pseudouridine synthase A of Burkholderia ambifaria (strain ATCC BAA-244 / DSM 16087 / CCUG 44356 / LMG 19182 / AMMD) (Burkholderia cepacia (strain AMMD)).